A 56-amino-acid polypeptide reads, in one-letter code: MAVQQNKPSRSKRGMRRSHDALTTSSVSVDKVSGETHLRHHITADGYYRGRKVIAK.

Positions 1 to 29 are disordered; sequence MAVQQNKPSRSKRGMRRSHDALTTSSVSV.

This sequence belongs to the bacterial ribosomal protein bL32 family.

The protein is Large ribosomal subunit protein bL32 of Pectobacterium atrosepticum (strain SCRI 1043 / ATCC BAA-672) (Erwinia carotovora subsp. atroseptica).